We begin with the raw amino-acid sequence, 246 residues long: Small ribosomal subunit protein uS2c (246 aa).

It belongs to the universal ribosomal protein uS2 family.

The protein resides in the plastid. It localises to the chloroplast. The chain is Small ribosomal subunit protein uS2c (rps2) from Pelargonium hortorum (Common geranium).